The primary structure comprises 182 residues: MSNTDDGFDKEAAREELREKYNADQQDREETARMSDLLLQGATMTNDHCDRCGTPLFRHDGETFCPTCQHDDNDDEPTATTQSAPDRSPPADPQATPHSSPPTTPDTSSSTAAATDDVPTAAARDRPEHAPTAEPTTPATEELESTIAALARRASDADDPRTAREYLEAAHEAAAALDTLRP.

The segment at methionine 1 to threonine 162 is disordered. Basic and acidic residues-rich tracts occupy residues glycine 7 to arginine 33 and aspartate 47 to glutamate 62. The span at proline 105–alanine 122 shows a compositional bias: low complexity. Positions arginine 153 to threonine 162 are enriched in basic and acidic residues.

This sequence belongs to the UPF0148 family.

In Halobacterium salinarum (strain ATCC 700922 / JCM 11081 / NRC-1) (Halobacterium halobium), this protein is UPF0148 protein VNG_2366C.